The sequence spans 163 residues: ATP synthase subunit delta, mitochondrial (163 aa).

Residues 1–18 (MLARTIQRFSVVAKRGYA) constitute a mitochondrion transit peptide.

The protein belongs to the ATPase epsilon chain family. Subunit of the F-type ATPase which has 2 components, CF(1) - the catalytic core - and CF(0) - the membrane proton channel.

The protein localises to the mitochondrion. The protein resides in the mitochondrion inner membrane. In terms of biological role, mitochondrial membrane ATP synthase (F(1)F(0) ATP synthase or Complex V) produces ATP from ADP in the presence of a proton gradient across the membrane which is generated by electron transport complexes of the respiratory chain. F-type ATPases consist of two structural domains, F(1) - containing the extramembraneous catalytic core, and F(0) - containing the membrane proton channel, linked together by a central stalk and a peripheral stalk. During catalysis, ATP turnover in the catalytic domain of F(1) is coupled via a rotary mechanism of the central stalk subunits to proton translocation. Part of the complex F(1) domain and of the central stalk which is part of the complex rotary element. The polypeptide is ATP synthase subunit delta, mitochondrial (Caenorhabditis elegans).